A 348-amino-acid polypeptide reads, in one-letter code: Anthranilate phosphoribosyltransferase (348 aa).

5-phospho-alpha-D-ribose 1-diphosphate-binding positions include Gly91, 94–95 (GD), Thr99, 101–104 (NIST), 119–127 (KHGNRSASG), and Ser131. Gly91 is a binding site for anthranilate. Ser103 is a Mg(2+) binding site. An anthranilate-binding site is contributed by Asn122. Residue Arg177 coordinates anthranilate. Residues Asp236 and Glu237 each contribute to the Mg(2+) site.

This sequence belongs to the anthranilate phosphoribosyltransferase family. In terms of assembly, homodimer. Mg(2+) serves as cofactor.

It catalyses the reaction N-(5-phospho-beta-D-ribosyl)anthranilate + diphosphate = 5-phospho-alpha-D-ribose 1-diphosphate + anthranilate. The protein operates within amino-acid biosynthesis; L-tryptophan biosynthesis; L-tryptophan from chorismate: step 2/5. Catalyzes the transfer of the phosphoribosyl group of 5-phosphorylribose-1-pyrophosphate (PRPP) to anthranilate to yield N-(5'-phosphoribosyl)-anthranilate (PRA). The chain is Anthranilate phosphoribosyltransferase from Synechococcus sp. (strain ATCC 27144 / PCC 6301 / SAUG 1402/1) (Anacystis nidulans).